We begin with the raw amino-acid sequence, 285 residues long: Tryptophan synthase alpha chain (285 aa).

Active-site proton acceptor residues include glutamate 53 and aspartate 64.

This sequence belongs to the TrpA family. Tetramer of two alpha and two beta chains.

It catalyses the reaction (1S,2R)-1-C-(indol-3-yl)glycerol 3-phosphate + L-serine = D-glyceraldehyde 3-phosphate + L-tryptophan + H2O. It participates in amino-acid biosynthesis; L-tryptophan biosynthesis; L-tryptophan from chorismate: step 5/5. The alpha subunit is responsible for the aldol cleavage of indoleglycerol phosphate to indole and glyceraldehyde 3-phosphate. This chain is Tryptophan synthase alpha chain, found in Bordetella parapertussis (strain 12822 / ATCC BAA-587 / NCTC 13253).